Here is a 327-residue protein sequence, read N- to C-terminus: Dipeptide transport ATP-binding protein DppF (327 aa).

The region spanning Leu-12 to Leu-261 is the ABC transporter domain. Gly-54–Ser-61 is a binding site for ATP.

It belongs to the ABC transporter superfamily.

It localises to the cell inner membrane. The catalysed reaction is a dipeptide(out) + ATP + H2O = a dipeptide(in) + ADP + phosphate + H(+). Part of the ABC transporter DppBCDF involved in dipeptide transport. Responsible for energy coupling to the transport system. This chain is Dipeptide transport ATP-binding protein DppF (dppF), found in Haemophilus influenzae (strain ATCC 51907 / DSM 11121 / KW20 / Rd).